Reading from the N-terminus, the 986-residue chain is Ankyrin repeat, PH and SEC7 domain containing protein secG (986 aa).

Low complexity predominate over residues 1–28; it reads MGSTSNSTKNTGSTTTTTTTAAPATTAK. A disordered region spans residues 1-43; it reads MGSTSNSTKNTGSTTTTTTTAAPATTAKHSNSAPTRPSVHYYS. The segment covering 29-43 has biased composition (polar residues); sequence HSNSAPTRPSVHYYS. ANK repeat units lie at residues 34–63, 68–97, 101–131, 135–164, 168–197, 201–230, 234–263, 267–296, 300–329, 334–363, 367–396, 400–429, 433–462, 466–495, and 499–528; these read PTRPSVHYYSSTGDIEKLSNLLNNSATSPD, EKRTPLHHAAFCGSAACVNFLLDKKANANI, AGNTPLQWASSRGHLECIKLLVEKGGVDVNT, KNGTPLHKASLFASAECVLYLLNGKADPRA, NGETPLHHASAGGNPQCVELLIKADSKVNA, DCITPLHQASFSGHSSCVSLLLKKGAKVDP, HGISPLHNAASAGYVDCVEQLVRNGENINC, EGVTPLHHTCFNGNLQLTKRLIELGAKINM, MGETPLHKAAFNGHKEVCEYLLYLDPTMID, RQSTSLHLAAFNGLLDMVDLLIRYKAQINI, EGATPLHKASFNGHSSCAKLLVDKGAPICI, QGATPLHKAAFNGRSKCLATLIRSGAELEV, QGGTPLHNAAYNGHSDCCRILLKKGANVNA, HSSTPLHLASAAGARDTVDVLIQFKARIDA, and AGKTPLVYAIKKNHSDVARVLIRAGADLDQ. Residues 580-770 form the SEC7 domain; that stretch reads QLAAEKQKLL…ENLYDKIVTN (191 aa). One can recognise a PH domain in the interval 784 to 895; it reads HVEKKGWLTK…WVQSIKSNIH (112 aa). Positions 911-986 are disordered; the sequence is IRGRGKVSTK…PVQQQTSALS (76 aa). The span at 920 to 929 shows a compositional bias: polar residues; that stretch reads KPIQNRKQTI. Composition is skewed to low complexity over residues 936–953 and 963–986; these read TTTTTTSTASNNVTSVGS and SSGSKPVTFSSTSSPVQQQTSALS.

The chain is Ankyrin repeat, PH and SEC7 domain containing protein secG (secG) from Dictyostelium discoideum (Social amoeba).